We begin with the raw amino-acid sequence, 234 residues long: Probable transcriptional regulatory protein MYCGA1330 (234 aa).

This sequence belongs to the TACO1 family.

The protein resides in the cytoplasm. The protein is Probable transcriptional regulatory protein MYCGA1330 of Mycoplasmoides gallisepticum (strain R(low / passage 15 / clone 2)) (Mycoplasma gallisepticum).